Consider the following 211-residue polypeptide: Urease accessory protein UreE (211 aa).

A disordered region spans residues 170–211 (EHHGHSHDRGCDHSHSHSHDHDHDHGHVHGPGCGHAPHHRHD). Positions 176–196 (HDRGCDHSHSHSHDHDHDHGH) are enriched in basic and acidic residues.

This sequence belongs to the UreE family.

The protein localises to the cytoplasm. Involved in urease metallocenter assembly. Binds nickel. Probably functions as a nickel donor during metallocenter assembly. The sequence is that of Urease accessory protein UreE from Ralstonia nicotianae (strain ATCC BAA-1114 / GMI1000) (Ralstonia solanacearum).